The primary structure comprises 422 residues: NADH-quinone oxidoreductase subunit D 1 (422 aa).

Belongs to the complex I 49 kDa subunit family. NDH-1 is composed of 14 different subunits. Subunits NuoB, C, D, E, F, and G constitute the peripheral sector of the complex.

The protein localises to the cell membrane. The catalysed reaction is a quinone + NADH + 5 H(+)(in) = a quinol + NAD(+) + 4 H(+)(out). In terms of biological role, NDH-1 shuttles electrons from NADH, via FMN and iron-sulfur (Fe-S) centers, to quinones in the respiratory chain. The immediate electron acceptor for the enzyme in this species is believed to be ubiquinone. Couples the redox reaction to proton translocation (for every two electrons transferred, four hydrogen ions are translocated across the cytoplasmic membrane), and thus conserves the redox energy in a proton gradient. This Herpetosiphon aurantiacus (strain ATCC 23779 / DSM 785 / 114-95) protein is NADH-quinone oxidoreductase subunit D 1.